The following is a 180-amino-acid chain: Large ribosomal subunit protein uL6 (180 aa).

It belongs to the universal ribosomal protein uL6 family. As to quaternary structure, part of the 50S ribosomal subunit.

In terms of biological role, this protein binds to the 23S rRNA, and is important in its secondary structure. It is located near the subunit interface in the base of the L7/L12 stalk, and near the tRNA binding site of the peptidyltransferase center. The protein is Large ribosomal subunit protein uL6 of Christiangramia forsetii (strain DSM 17595 / CGMCC 1.15422 / KT0803) (Gramella forsetii).